Consider the following 452-residue polypeptide: Aspartyl/glutamyl-tRNA(Asn/Gln) amidotransferase subunit B (452 aa).

This sequence belongs to the GatB/GatE family. GatB subfamily. In terms of assembly, heterotrimer of A, B and C subunits.

It catalyses the reaction L-glutamyl-tRNA(Gln) + L-glutamine + ATP + H2O = L-glutaminyl-tRNA(Gln) + L-glutamate + ADP + phosphate + H(+). The enzyme catalyses L-aspartyl-tRNA(Asn) + L-glutamine + ATP + H2O = L-asparaginyl-tRNA(Asn) + L-glutamate + ADP + phosphate + 2 H(+). Allows the formation of correctly charged Asn-tRNA(Asn) or Gln-tRNA(Gln) through the transamidation of misacylated Asp-tRNA(Asn) or Glu-tRNA(Gln) in organisms which lack either or both of asparaginyl-tRNA or glutaminyl-tRNA synthetases. The reaction takes place in the presence of glutamine and ATP through an activated phospho-Asp-tRNA(Asn) or phospho-Glu-tRNA(Gln). This chain is Aspartyl/glutamyl-tRNA(Asn/Gln) amidotransferase subunit B, found in Methanosphaera stadtmanae (strain ATCC 43021 / DSM 3091 / JCM 11832 / MCB-3).